We begin with the raw amino-acid sequence, 408 residues long: Putative UPF0496 protein 2 (408 aa).

Helical transmembrane passes span 224 to 244 and 252 to 272; these read RIAR…AIVA and ALVG…GAAR. Positions 385–408 are disordered; that stretch reads MARGLPPPSPATVTTTSEERLTSS.

The protein belongs to the UPF0496 family.

Its subcellular location is the membrane. The sequence is that of Putative UPF0496 protein 2 from Oryza sativa subsp. japonica (Rice).